The sequence spans 461 residues: MSLRIHNTLTRSTEAFSPIEPGHVRMYVCGMTIYDLCHVGHARMMMAFDVVQRWLRVSGLRVTYVRNITDIDDKIIKRALERGIPIRQLTDEMTAAMHQDIGALGIEPPTHEPRATEYVGAMVGLIEVLERNGLAYRVPGGDVNYSVRKFPGYGRLSGKSIDALRAGERVAVLEGKDDPLDFVLWKAAKPEEPADAKYDAPFGPGRPGWHIECSAMSHALLGERFDIHGGGMDLQFPHHENEIAQSDGAFHLGSGHSFVNVWMHNGFLNVDNEKMSKSLGNFFTIRDILKRYDGETIRFFMLRVHYRSPFNFSDAGLDDARSGLRRLYTALEGTAVAPAEIDWTDPHAARFKAAMDDDFNTPIAVSVLFDLAGEVNRSRSAQSAGLLRSLAGTLGLLQQEAAQYLQGGSGVDTGHIEAQIAARAAAKAARDFAESDRIRDALAAQGIVLKDTPAGTTWVKA.

C29 contacts Zn(2+). Positions 31–41 (MTIYDLCHVGH) match the 'HIGH' region motif. Zn(2+) contacts are provided by C213, H238, and E242. The 'KMSKS' region motif lies at 274 to 278 (KMSKS). K277 provides a ligand contact to ATP.

Belongs to the class-I aminoacyl-tRNA synthetase family. In terms of assembly, monomer. The cofactor is Zn(2+).

It is found in the cytoplasm. It carries out the reaction tRNA(Cys) + L-cysteine + ATP = L-cysteinyl-tRNA(Cys) + AMP + diphosphate. This chain is Cysteine--tRNA ligase, found in Methylibium petroleiphilum (strain ATCC BAA-1232 / LMG 22953 / PM1).